Reading from the N-terminus, the 469-residue chain is Neuraminidase (469 aa).

Over 1 to 6 (MNTNQR) the chain is Intravirion. A helical membrane pass occupies residues 7–27 (IITIGTICLIVGIISLLLQIG). The segment at 11–33 (GTICLIVGIISLLLQIGNIISLW) is involved in apical transport and lipid raft association. Topologically, residues 28–469 (NIISLWISHS…GADLPFTIDK (442 aa)) are virion surface. Residues 36–90 (HSIQTREKNHPEVCNQSVITYENNTWVNQTYVNISNANIVAGQGVTSIILAGNSP) are hypervariable stalk region. Asparagine 50, asparagine 58, asparagine 63, and asparagine 68 each carry an N-linked (GlcNAc...) asparagine; by host glycan. The head of neuraminidase stretch occupies residues 91–469 (LCPISGWAIY…GADLPFTIDK (379 aa)). 8 disulfides stabilise this stretch: cysteine 92-cysteine 417, cysteine 124-cysteine 129, cysteine 184-cysteine 231, cysteine 233-cysteine 238, cysteine 279-cysteine 292, cysteine 281-cysteine 290, cysteine 318-cysteine 335, and cysteine 421-cysteine 446. Arginine 118 provides a ligand contact to substrate. Asparagine 146 carries an N-linked (GlcNAc...) asparagine; by host glycan. Aspartate 151 (proton donor/acceptor) is an active-site residue. Residue arginine 152 coordinates substrate. The N-linked (GlcNAc...) asparagine; by host glycan is linked to asparagine 235. 277 to 278 (EE) contributes to the substrate binding site. Arginine 293 is a binding site for substrate. Residues aspartate 294, aspartate 324, and asparagine 344 each contribute to the Ca(2+) site. A substrate-binding site is contributed by arginine 368. Tyrosine 402 acts as the Nucleophile in catalysis. A glycan (N-linked (GlcNAc...) asparagine; by host) is linked at asparagine 454.

The protein belongs to the glycosyl hydrolase 34 family. As to quaternary structure, homotetramer. The cofactor is Ca(2+). In terms of processing, N-glycosylated.

The protein resides in the virion membrane. It localises to the host apical cell membrane. It catalyses the reaction Hydrolysis of alpha-(2-&gt;3)-, alpha-(2-&gt;6)-, alpha-(2-&gt;8)- glycosidic linkages of terminal sialic acid residues in oligosaccharides, glycoproteins, glycolipids, colominic acid and synthetic substrates.. Inhibited by the neuraminidase inhibitors zanamivir (Relenza) and oseltamivir (Tamiflu). These drugs interfere with the release of progeny virus from infected cells and are effective against all influenza strains. Resistance to neuraminidase inhibitors is quite rare. Functionally, catalyzes the removal of terminal sialic acid residues from viral and cellular glycoconjugates. Cleaves off the terminal sialic acids on the glycosylated HA during virus budding to facilitate virus release. Additionally helps virus spread through the circulation by further removing sialic acids from the cell surface. These cleavages prevent self-aggregation and ensure the efficient spread of the progeny virus from cell to cell. Otherwise, infection would be limited to one round of replication. Described as a receptor-destroying enzyme because it cleaves a terminal sialic acid from the cellular receptors. May facilitate viral invasion of the upper airways by cleaving the sialic acid moieties on the mucin of the airway epithelial cells. Likely to plays a role in the budding process through its association with lipid rafts during intracellular transport. May additionally display a raft-association independent effect on budding. Plays a role in the determination of host range restriction on replication and virulence. Sialidase activity in late endosome/lysosome traffic seems to enhance virus replication. The sequence is that of Neuraminidase from Influenza A virus (strain A/Swine/Wisconsin/1/1967 H1N1).